Consider the following 419-residue polypeptide: Probable pectate lyase C (419 aa).

The N-terminal stretch at 1-19 (MRLGIALFSLIGLCHSVSA) is a signal peptide. N-linked (GlcNAc...) asparagine glycans are attached at residues asparagine 48, asparagine 164, and asparagine 201. The active site involves arginine 204. One can recognise an EF-hand domain in the interval 261 to 296 (NEYFHGYVETNYYDPDRDGTLNGNELGVSASNYGGM). Ca(2+)-binding residues include aspartate 274, aspartate 276, aspartate 278, threonine 280, and glutamate 285. Residues 350–395 (ELISDEASMGGPGDLDGGSPPTDSDGDGIPDDAETEIGSDPNTADS) are disordered. A compositionally biased stretch (acidic residues) spans 373–386 (SDGDGIPDDAETEI).

The protein belongs to the polysaccharide lyase 1 family. Ca(2+) serves as cofactor.

The protein resides in the secreted. It catalyses the reaction Eliminative cleavage of (1-&gt;4)-alpha-D-galacturonan to give oligosaccharides with 4-deoxy-alpha-D-galact-4-enuronosyl groups at their non-reducing ends.. Pectinolytic enzyme consist of four classes of enzymes: pectin lyase, polygalacturonase, pectin methylesterase and rhamnogalacturonase. Among pectinolytic enzymes, pectin lyase is the most important in depolymerization of pectin, since it cleaves internal glycosidic bonds of highly methylated pectins. Favors pectate, the anion, over pectin, the methyl ester. The polypeptide is Probable pectate lyase C (plyC) (Aspergillus terreus (strain NIH 2624 / FGSC A1156)).